The sequence spans 668 residues: Protein brown (668 aa).

Topologically, residues 1-412 are cytoplasmic; the sequence is MPMDEGDAQG…TEDLANIRSG (412 aa). The ABC transporter domain occupies 31-328; sequence YSFWNECRKQ…FTEGFMQPKN (298 aa). 63–70 contributes to the ATP binding site; that stretch reads GGSGAGKT. The helical transmembrane segment at 413 to 433 threads the bilayer; it reads LIGFGFFMTTAVTLSLMYSGV. Residues 434–453 are Extracellular-facing; it reads GGLTQRTVQDVGGSIFMLSN. The helical transmembrane segment at 454 to 474 threads the bilayer; it reads EMIFTFSYGVTYIFPAALPII. At 475–490 the chain is on the cytoplasmic side; it reads RREVAEGTYSLSAYYV. Residues 491–511 traverse the membrane as a helical segment; it reads ALVLSFVPVAFFKGYMFLSVI. Residues 512–524 are Extracellular-facing; it reads YASIYYTRGFLLY. A helical membrane pass occupies residues 525–545; it reads ITMGFLMSLSAIAAVGYGVFL. Over 546-561 the chain is Cytoplasmic; it reads SSLFETDKMASECAAP. Residues 562 to 582 form a helical membrane-spanning segment; it reads FDLIFLIFGGTYMNVDSVPLL. The Extracellular portion of the chain corresponds to 583–637; that stretch reads KYFSLFFYSNEALMYNFWIDIDNIACXVNDEHPCCQTGLEVLQQASFRTADYTFW. A helical membrane pass occupies residues 638–658; that stretch reads LDCASLLVVALVFHIVSFTLI. Residues 659–668 are Cytoplasmic-facing; sequence RRYINRSGYY.

Belongs to the ABC transporter superfamily. ABCG family. Eye pigment precursor importer (TC 3.A.1.204) subfamily. May form a heterodimer with w/white. As to expression, expressed in eyes.

It localises to the membrane. The enzyme catalyses guanine(out) + ATP + H2O = guanine(in) + ADP + phosphate + H(+). It catalyses the reaction riboflavin(in) + ATP + H2O = riboflavin(out) + ADP + phosphate + H(+). The catalysed reaction is (6S)-5,6,7,8-tetrahydrofolate(out) + ATP + H2O = (6S)-5,6,7,8-tetrahydrofolate(in) + ADP + phosphate + H(+). Functionally, ATP-dependent transporter of the ATP-binding cassette (ABC) family which transports various molecules including bioamines, neurotransmitters and metabolic intermediates. In the eye and probably in association with w/white, required for the transport of the eye red pigment precursor, guanine, into pigment cell granules. In Malpighian tubules, involved in guanine uptake. Probably in association with w/white, involved in aging-induced intestinal stem cell proliferation in the midgut by regulating tetrahydrofolate transport. The chain is Protein brown from Drosophila virilis (Fruit fly).